The chain runs to 185 residues: MISVNDFKTGLTVEVDNDIWQVIEFQHVKPGKGAAFVRSKLRNLRSGNIQEKTFRAGEKVSKAHIENRKMQYLYASGDAHAFMDTNTYDQIEIQGKQIQEQLKFIKENMEVSIVSYENEILGVDLPNNVELTVTETEPGIKGDTASGGSKPATLETGLIVQVPFFINEGDVLVINTSDGKYVSRA.

The protein belongs to the elongation factor P family.

It is found in the cytoplasm. It participates in protein biosynthesis; polypeptide chain elongation. Its function is as follows. Involved in peptide bond synthesis. Stimulates efficient translation and peptide-bond synthesis on native or reconstituted 70S ribosomes in vitro. Probably functions indirectly by altering the affinity of the ribosome for aminoacyl-tRNA, thus increasing their reactivity as acceptors for peptidyl transferase. This chain is Elongation factor P, found in Oceanobacillus iheyensis (strain DSM 14371 / CIP 107618 / JCM 11309 / KCTC 3954 / HTE831).